Consider the following 523-residue polypeptide: Keratin, type II cytoskeletal 71 (523 aa).

The head stretch occupies residues Met-1–Gln-129. Residues Glu-130 to Leu-165 form a coil 1A region. The region spanning Glu-130 to Met-443 is the IF rod domain. Positions Gln-166–Tyr-184 are linker 1. The segment at Ile-185–Ile-276 is coil 1B. The tract at residues Gln-277–Ile-300 is linker 12. The coil 2 stretch occupies residues Ile-301–Glu-439. Residues Glu-440–Arg-523 are tail. The disordered stretch occupies residues Gly-492–Arg-523. Positions Gly-493–Leu-508 are enriched in basic and acidic residues. Over residues Lys-510–Arg-523 the composition is skewed to polar residues.

The protein belongs to the intermediate filament family. As to quaternary structure, heterodimer of a type I and a type II keratin. Associates with KRT16 and/or KRT17. As to expression, highly expressed in hair follicles from scalp. Specifically expressed in the inner root sheath (IRS) of the hair follicle. Present in the all 3 IRS layers: the cuticle, the Henle and the Huxley layers. Also detected in the pseudopods of specialized Huxley cells, termed Fluegelzellen, along the area of differentiated Henle cells (at protein level).

It localises to the cytoplasm. Its subcellular location is the cytoskeleton. Plays a central role in hair formation. Essential component of keratin intermediate filaments in the inner root sheath (IRS) of the hair follicle. The protein is Keratin, type II cytoskeletal 71 (KRT71) of Homo sapiens (Human).